The following is a 258-amino-acid chain: Imidazole glycerol phosphate synthase subunit HisF (258 aa).

Catalysis depends on residues aspartate 11 and aspartate 130.

Belongs to the HisA/HisF family. As to quaternary structure, heterodimer of HisH and HisF.

The protein resides in the cytoplasm. The catalysed reaction is 5-[(5-phospho-1-deoxy-D-ribulos-1-ylimino)methylamino]-1-(5-phospho-beta-D-ribosyl)imidazole-4-carboxamide + L-glutamine = D-erythro-1-(imidazol-4-yl)glycerol 3-phosphate + 5-amino-1-(5-phospho-beta-D-ribosyl)imidazole-4-carboxamide + L-glutamate + H(+). The protein operates within amino-acid biosynthesis; L-histidine biosynthesis; L-histidine from 5-phospho-alpha-D-ribose 1-diphosphate: step 5/9. IGPS catalyzes the conversion of PRFAR and glutamine to IGP, AICAR and glutamate. The HisF subunit catalyzes the cyclization activity that produces IGP and AICAR from PRFAR using the ammonia provided by the HisH subunit. The protein is Imidazole glycerol phosphate synthase subunit HisF of Cronobacter sakazakii (strain ATCC BAA-894) (Enterobacter sakazakii).